Reading from the N-terminus, the 1143-residue chain is AP-3 complex subunit delta (1143 aa).

HEAT repeat units lie at residues 129–166 (DLARELANDILTLLSTQKTHILKRAITVLYKIFLRYPE), 167–203 (SLRPAFPKLREKLDDPEPSVVSCSVNVICELARRNPK), 205–242 (YLPLAPVLFRILTNTTNNYWMLIKIVKLFAALTPHEPR), 245–279 (KKLIDPLTNIINSSPSVSLLYECIQTCITGMSDHI), 280–317 (PLMKLCISKLRTLIEHNDQNLKYLGLLALNNIMKIHPK), 318–354 (AVSEHRDLVLNCLEDDDISIRLRALDLLPGMTSKKNI), 356–389 (DIVFKLLDHLDNAEGQYKEQIIEKIIELCSMGTY), and 416–455 (LIASQLLDVVIRVKIVRAYSTRQMIELLKNPKLMSNPTEG). Disordered stretches follow at residues 520-541 (KIPSLDDDDEEEEAQEEEDQNE), 634-692 (QEPI…RHPI), 704-728 (KQANNPYMLGGKVSKKLSTNDPENI), 741-792 (HVGA…NDAL), and 829-899 (KKNA…QAAA). A compositionally biased stretch (acidic residues) spans 524–540 (LDDDDEEEEAQEEEDQN). Positions 526-550 (DDDEEEEAQEEEDQNEITHEIVQEC) form a coiled coil. The segment covering 653 to 662 (HQKKHHKHHR) has biased composition (basic residues). Positions 666-675 (DGDDDEDDET) are enriched in acidic residues. Residues 814-835 (TDIIKEKEREMAMLAKKNAKLS) adopt a coiled-coil conformation. Over residues 840–849 (PSTANYSEVT) the composition is skewed to polar residues. Composition is skewed to low complexity over residues 854–867 (APAKKATKKAAAGS) and 881–899 (KPAATSSTTTTTKSTQAAA). The GAE domain occupies 914–1016 (KTILDDDNFK…FTLLASPSSS (103 aa)).

This sequence belongs to the adaptor complexes large subunit family. In terms of assembly, adaptor protein complex 3 (AP-3) is a heterotetramer composed of two large adaptins (delta-type subunit and beta-type subunit), a medium adaptin (mu-type subunit) and a small adaptin (sigma-type subunit).

The protein localises to the endosome membrane. Functionally, part of the AP-3 complex, an adaptor-related complex which is essential for the compartmentalization of the endocytic pathway. This chain is AP-3 complex subunit delta (ap3d1), found in Dictyostelium discoideum (Social amoeba).